The following is a 409-amino-acid chain: Pleckstrin homology domain-containing family O member 1 (409 aa).

Residues 1 to 24 form a disordered region; it reads MMKKNNSAKRGPQDGNQQPAPPEK. One can recognise a PH domain in the interval 21–132; sequence PPEKVGWVRK…WINALNSAIT (112 aa). The interval 133–193 is interaction with capping proteins (CPs); it reads RAKNRILDEV…MLTLDLIQEE (61 aa). Positions 136–308 are interaction with ATM, CKIP, IFP35 and NMI; sequence NRILDEVTVE…LPNPGQLSRI (173 aa). The disordered stretch occupies residues 218-267; sequence LAGSRRRADSDRIQPSADRASSLSRPWEKTDKGATYTPQAPKKLTPTEKG. Serine 227 and serine 271 each carry phosphoserine. A negative regulator of AP-1 activity region spans residues 308–409; sequence IQDLVARKLE…PHSQYRKSLM (102 aa). Disordered stretches follow at residues 325–350 and 390–409; these read EVQG…ESEQ and TPDS…KSLM. Positions 331-340 are enriched in basic and acidic residues; sequence DGKRKAKDPP. Serine 342 carries the post-translational modification Phosphoserine. Positions 390-402 are enriched in polar residues; it reads TPDSHLRQTTPHS.

As to quaternary structure, heterodimer or homodimer. Interacts with CK2 and actin capping subunits (capping protein CP-alpha and CP-beta). CKIP1 and CK2 together inhibit the activity of actin capping protein at the barbed ends of actin filaments. Interacts with ATM, IFP35, JUN, JUND, NMI and PI3K. Interacts with AKT1, AKT2 and AKT3 (each isozyme of PKB), PtdIns(3,5)P2, PtdIns(4,5)P2 and PtdIns(3,4,5)P2. C-terminal fragments could be released during apoptosis via caspase-3-dependent cleavage. In terms of tissue distribution, abundantly expressed in skeletal muscle and heart, moderately in kidney, liver, brain and placenta and sparingly in the pancreas and lung. Easily detectable in cell lines such as MOLT-4, HEK293 and Jurkat.

Its subcellular location is the cell membrane. The protein resides in the nucleus. The protein localises to the cytoplasm. Functionally, plays a role in the regulation of the actin cytoskeleton through its interactions with actin capping protein (CP). May function to target CK2 to the plasma membrane thereby serving as an adapter to facilitate the phosphorylation of CP by protein kinase 2 (CK2). Appears to target ATM to the plasma membrane. Appears to also inhibit tumor cell growth by inhibiting AKT-mediated cell-survival. Also implicated in PI3K-regulated muscle differentiation, the regulation of AP-1 activity (plasma membrane bound AP-1 regulator that translocates to the nucleus) and the promotion of apoptosis induced by tumor necrosis factor TNF. When bound to PKB, it inhibits it probably by decreasing PKB level of phosphorylation. In Homo sapiens (Human), this protein is Pleckstrin homology domain-containing family O member 1 (PLEKHO1).